The sequence spans 146 residues: Hemoglobin subunit beta (146 aa).

One can recognise a Globin domain in the interval 2-146 (HWSAEEKQLI…VAHALARKYH (145 aa)). Residues His63 and His92 each contribute to the heme b site.

The protein belongs to the globin family. Heterotetramer of two alpha chains and two beta chains. Red blood cells.

Involved in oxygen transport from the lung to the various peripheral tissues. The polypeptide is Hemoglobin subunit beta (HBB) (Stercorarius maccormicki (South polar skua)).